Consider the following 276-residue polypeptide: Elongation factor Ts (276 aa).

The tract at residues T81–V84 is involved in Mg(2+) ion dislocation from EF-Tu.

Belongs to the EF-Ts family.

The protein resides in the cytoplasm. Its function is as follows. Associates with the EF-Tu.GDP complex and induces the exchange of GDP to GTP. It remains bound to the aminoacyl-tRNA.EF-Tu.GTP complex up to the GTP hydrolysis stage on the ribosome. In Leifsonia xyli subsp. xyli (strain CTCB07), this protein is Elongation factor Ts.